A 415-amino-acid chain; its full sequence is Casein kinase I isoform delta (415 aa).

In terms of domain architecture, Protein kinase spans Tyr-9 to Phe-277. Residues Ile-15–Ile-23 and Lys-38 contribute to the ATP site. Asp-128 acts as the Proton acceptor in catalysis. Residues His-278–Glu-364 are centrosomal localization signal (CLS). The span at Ala-301–Leu-315 shows a compositional bias: basic and acidic residues. Residues Ala-301–Arg-415 form a disordered region. Residues His-317–Pro-342 are autoinhibitory. Phosphoserine is present on residues Ser-328 and Ser-331. A compositionally biased stretch (polar residues) spans Thr-347–Arg-358. Residue Ser-370 is modified to Phosphoserine. Arg-375 carries the omega-N-methylarginine modification. The span at Asn-380 to Ile-400 shows a compositional bias: polar residues. Residues Ser-382, Ser-383, Ser-384, Ser-407, and Ser-411 each carry the phosphoserine modification.

The protein belongs to the protein kinase superfamily. CK1 Ser/Thr protein kinase family. Casein kinase I subfamily. As to quaternary structure, monomer. Component of the circadian core oscillator, which includes the CRY proteins, CLOCK, or NPAS2, ARTNL/BMAL1 or ARTNL2/BMAL2, CSNK1D and/or CSNK1E, TIMELESS and the PER proteins. Interacts with DNMT1 and MAP1A. Interacts directly with PER1 and PER2 which may lead to their degradation. Interacts with MAPT/TAU, SNAPIN, DBNDD2, AIB1/NCOA3 and ESR1. Interacts with AKAP9/AKAP450; this interaction promotes centrosomal subcellular location. Binds to tubulins in mitotic cells upon DNA damage. Interacts with GJA1. Interacts with DDX3X; this interaction enhances CSNK1D kinase activity in vitro, but it is unclear whether this interaction is physiologically relevant. Interacts with FAM83A, FAM83B, FAM83E and FAM83H (via DUF1669). Post-translationally, autophosphorylated on serine and threonine residues; this autophosphorylation represses activity. Reactivated by phosphatase-mediated dephosphorylation. May be dephosphorylated by PP1.

Its subcellular location is the cytoplasm. It localises to the nucleus. The protein resides in the cytoskeleton. It is found in the microtubule organizing center. The protein localises to the centrosome. Its subcellular location is the perinuclear region. It localises to the cell membrane. The protein resides in the spindle. It is found in the golgi apparatus. The enzyme catalyses L-seryl-[protein] + ATP = O-phospho-L-seryl-[protein] + ADP + H(+). The catalysed reaction is L-threonyl-[protein] + ATP = O-phospho-L-threonyl-[protein] + ADP + H(+). It catalyses the reaction L-seryl-[tau protein] + ATP = O-phospho-L-seryl-[tau protein] + ADP + H(+). It carries out the reaction L-threonyl-[tau protein] + ATP = O-phospho-L-threonyl-[tau protein] + ADP + H(+). Exhibits substrate-dependent heparin activation. Drug-mediated inhibition leads to a delay of the oscillations with the magnitude of this effect dependent upon the timing of drug administration. Inhibited by phosphorylation. Essential serine/threonine-protein kinase that regulates diverse cellular growth and survival processes including Wnt signaling, DNA repair and circadian rhythms. It can phosphorylate a large number of proteins. Casein kinases are operationally defined by their preferential utilization of acidic proteins such as caseins as substrates. Phosphorylates connexin-43/GJA1, MAP1A, SNAPIN, MAPT/TAU, TOP2A, DCK, HIF1A, EIF6, p53/TP53, DVL2, DVL3, ESR1, AIB1/NCOA3, DNMT1, PKD2, YAP1, PER1 and PER2. Central component of the circadian clock. In balance with PP1, determines the circadian period length through the regulation of the speed and rhythmicity of PER1 and PER2 phosphorylation. Controls PER1 and PER2 nuclear transport and degradation. YAP1 phosphorylation promotes its SCF(beta-TRCP) E3 ubiquitin ligase-mediated ubiquitination and subsequent degradation. DNMT1 phosphorylation reduces its DNA-binding activity. Phosphorylation of ESR1 and AIB1/NCOA3 stimulates their activity and coactivation. Phosphorylation of DVL2 and DVL3 regulates WNT3A signaling pathway that controls neurite outgrowth. Phosphorylates NEDD9/HEF1. EIF6 phosphorylation promotes its nuclear export. Triggers down-regulation of dopamine receptors in the forebrain. Activates DCK in vitro by phosphorylation. TOP2A phosphorylation favors DNA cleavable complex formation. May regulate the formation of the mitotic spindle apparatus in extravillous trophoblast. Modulates connexin-43/GJA1 gap junction assembly by phosphorylation. Probably involved in lymphocyte physiology. Regulates fast synaptic transmission mediated by glutamate. This is Casein kinase I isoform delta (CSNK1D) from Pongo abelii (Sumatran orangutan).